A 232-amino-acid chain; its full sequence is Recombination protein RecR (232 aa).

A C4-type zinc finger spans residues 92–107 (CQVCFHLSAEPVCDIC). Residues 115 to 209 (SVICVVSDPR…KVTRIAFGLP (95 aa)) form the Toprim domain.

Belongs to the RecR family.

In terms of biological role, may play a role in DNA repair. It seems to be involved in an RecBC-independent recombinational process of DNA repair. It may act with RecF and RecO. This is Recombination protein RecR from Synechocystis sp. (strain ATCC 27184 / PCC 6803 / Kazusa).